The sequence spans 98 residues: Leydig cell tumor 10 kDa protein homolog (98 aa).

Disordered stretches follow at residues Met-1–Ala-38 and Ser-73–Ala-98. A compositionally biased stretch (low complexity) spans Ser-16 to Ala-25. The span at Arg-28 to Ala-38 shows a compositional bias: basic residues. Low complexity predominate over residues Ser-73–Ala-83.

This sequence belongs to the UPF0390 family.

Functionally, may have a potential role in hypercalcemia of malignancy. This chain is Leydig cell tumor 10 kDa protein homolog, found in Bos taurus (Bovine).